The chain runs to 387 residues: 3-ketoacyl-CoA thiolase (387 aa).

Residue Cys91 is the Acyl-thioester intermediate of the active site. Residues His343 and Cys373 each act as proton acceptor in the active site.

The protein belongs to the thiolase-like superfamily. Thiolase family. Heterotetramer of two alpha chains (FadB) and two beta chains (FadA).

It is found in the cytoplasm. The enzyme catalyses an acyl-CoA + acetyl-CoA = a 3-oxoacyl-CoA + CoA. It functions in the pathway lipid metabolism; fatty acid beta-oxidation. In terms of biological role, catalyzes the final step of fatty acid oxidation in which acetyl-CoA is released and the CoA ester of a fatty acid two carbons shorter is formed. This chain is 3-ketoacyl-CoA thiolase, found in Aeromonas salmonicida (strain A449).